We begin with the raw amino-acid sequence, 441 residues long: MSECDKELVDMVWGRNNSNGLADSVFKRWTQGFVFSASEPTALEQFEGGPCAVLAPVQAFLLKRQLFNTEHSNWRSCQDEEQKEILCHTLSDILEIVSFNSNSYCLASWLKEKATRETEQENPAESSQQNEQPTALAAEELGFERFHASIQKRKFNSLSELKEAVLETYSTWRNKYGVLLFLYSVILTKGIENVKNEIEDAERPLIDPVYGHGSQSLINLLLTGHAVSNVWDGDRECSGMKLQGIHSHADVGFLTILESLRFCKVGSFLKSPKFPIWVIGSETHLTVFFTKEMALVAPEAPSEQARRVFETYDPEDNGFIPDAVLEDVMKALDLVSDTDYVNLMKTKLDPEGLGIILLGPFLLEFFPEQSSKVPESFTVYHYNGLRQSNHNEKVAYIEGTAVMGFEDPRLQTDDTPVKCCLQTKWPFVELLWSADRPPSLI.

The active-site Nucleophile is Cys51. Catalysis depends on His284, which acts as the Proton acceptor.

The protein belongs to the MINDY deubiquitinase family. FAM188 subfamily.

The protein resides in the nucleus. The enzyme catalyses Thiol-dependent hydrolysis of ester, thioester, amide, peptide and isopeptide bonds formed by the C-terminal Gly of ubiquitin (a 76-residue protein attached to proteins as an intracellular targeting signal).. Functionally, hydrolase that can remove 'Lys-48'-linked conjugated ubiquitin from proteins. The polypeptide is Ubiquitin carboxyl-terminal hydrolase MINDY-3 (mindy3) (Xenopus tropicalis (Western clawed frog)).